Reading from the N-terminus, the 128-residue chain is Large ribosomal subunit protein bL19 (128 aa).

Belongs to the bacterial ribosomal protein bL19 family.

Its function is as follows. This protein is located at the 30S-50S ribosomal subunit interface and may play a role in the structure and function of the aminoacyl-tRNA binding site. This Verminephrobacter eiseniae (strain EF01-2) protein is Large ribosomal subunit protein bL19.